The primary structure comprises 98 residues: UPF0251 protein VC0395_0048/VC395_A0084 (98 aa).

Belongs to the UPF0251 family.

This chain is UPF0251 protein VC0395_0048/VC395_A0084, found in Vibrio cholerae serotype O1 (strain ATCC 39541 / Classical Ogawa 395 / O395).